Reading from the N-terminus, the 910-residue chain is METTANEHGSEAEENTAEAAPVRLTPMMEQYIEIKAANVDSLLFYRMGDFYELFFDDAVEASAALGITLTKRGKHLGEDIPMCGVPVHAADDYLQKLIAKGYRVAVCEQVEDPAEAKKRGSKSVVKRDVIRLVTPGTLTEEKLLDPSEANFLMAMGRTRGDGALALAWIDISTGTFRVAETTPDRLFADVMRVDPRELVVADSAFHDEELRPVFDLVGKAVTPQPATLFDSAAAETRIQRYFNVATLDGFGQFSRPELSAISGAIAYIEKTQISERPPLMRPEREHEGGTLFIDPATRASLELARTMSGNRDGSLLKAVDRTVTGGGARLLAERLTAPLTNPKEIALRLDSVSWFLSEQSLCEAMRAELKGVPDMPRGLSRLAVGRGGPRDLGSLARGFEAAHVIASLLESALLPDELAHARDAVSAMPAIFTAHLDRALADELPLLKRDGGFVRGGYNSELDEMRALRDQSRRVIAGLQANYIEETGIKSLKIKHNNVLGYFIEVTANNAGAMTDTDEAKSRFIHRQTMANAMRFTTTELAELESKIANAADRALSIELAVFEELTAEAVSHADSIRAAASALAVFDVSASLAVLAEEQGYCRPQVDDSLSFNIVAGRHPVVEQALRRQAANPFVANDCDLSPQADGGNGAIWLLTGPNMGGKSTFLRQNALIAIMAQMGSFVPAGSAKIGVVDRLFSRVGASDDLARGRSTFMVEMVETAAILNQAGERSLVILDEIGRGTATFDGLSIAWAAVEYLHEKNRCRALFATHFHEMTALSEKLERLSNVTMRVKEWDNDVVFLHEVAKGAADRSYGVQVARLAGLPEAVVNRARDVLHQLEAGETSGKADKLIDDLPLFSVVLQQEKPKLQVQGKDSDLTKAVSAISPDELTPREALDLIYKLKELAGRA.

Residue 658-665 (GPNMGGKS) participates in ATP binding.

This sequence belongs to the DNA mismatch repair MutS family.

Functionally, this protein is involved in the repair of mismatches in DNA. It is possible that it carries out the mismatch recognition step. This protein has a weak ATPase activity. In Brucella anthropi (strain ATCC 49188 / DSM 6882 / CCUG 24695 / JCM 21032 / LMG 3331 / NBRC 15819 / NCTC 12168 / Alc 37) (Ochrobactrum anthropi), this protein is DNA mismatch repair protein MutS.